Reading from the N-terminus, the 282-residue chain is Putative hydrolase Bcenmc03_4750 (282 aa).

Glu-124, Glu-126, and Asp-155 together coordinate Mg(2+).

Belongs to the FAH family. Requires Mg(2+) as cofactor.

The polypeptide is Putative hydrolase Bcenmc03_4750 (Burkholderia orbicola (strain MC0-3)).